The sequence spans 29 residues: Photosystem I reaction center subunit XII (29 aa).

Residues 7–24 traverse the membrane as a helical segment; it reads FVALLLALVPAVLAYRLG.

It belongs to the PsaM family.

The protein localises to the cellular thylakoid membrane. The chain is Photosystem I reaction center subunit XII from Synechococcus sp. (strain ATCC 27144 / PCC 6301 / SAUG 1402/1) (Anacystis nidulans).